Reading from the N-terminus, the 223-residue chain is Adenylate kinase (223 aa).

10 to 15 contacts ATP; it reads GSGKGT. The tract at residues 30–59 is NMP; that stretch reads ESGAIFREHIGGGTELGMKAKGYIDKGELV. AMP-binding positions include S31, R36, 57-59, 84-87, and Q91; these read ELV and GFPR. Residues 125–164 form an LID region; the sequence is GRRLCANDPNHPNNIFIDAIKPNGDKCRVCGGDLKTRSDD. R126 provides a ligand contact to ATP. AMP is bound by residues R161 and R173. G209 provides a ligand contact to ATP.

It belongs to the adenylate kinase family. As to quaternary structure, monomer.

It is found in the cytoplasm. The enzyme catalyses AMP + ATP = 2 ADP. It functions in the pathway purine metabolism; AMP biosynthesis via salvage pathway; AMP from ADP: step 1/1. Its function is as follows. Catalyzes the reversible transfer of the terminal phosphate group between ATP and AMP. Plays an important role in cellular energy homeostasis and in adenine nucleotide metabolism. In Solidesulfovibrio magneticus (strain ATCC 700980 / DSM 13731 / RS-1) (Desulfovibrio magneticus), this protein is Adenylate kinase.